Consider the following 185-residue polypeptide: Elongation factor P (185 aa).

Belongs to the elongation factor P family.

Its subcellular location is the cytoplasm. It functions in the pathway protein biosynthesis; polypeptide chain elongation. Involved in peptide bond synthesis. Stimulates efficient translation and peptide-bond synthesis on native or reconstituted 70S ribosomes in vitro. Probably functions indirectly by altering the affinity of the ribosome for aminoacyl-tRNA, thus increasing their reactivity as acceptors for peptidyl transferase. The sequence is that of Elongation factor P from Microcystis aeruginosa (strain NIES-843 / IAM M-2473).